An 867-amino-acid chain; its full sequence is Leucine--tRNA ligase (867 aa).

The short motif at 42–52 is the 'HIGH' region element; it reads PYPSGKLHMGH. Positions 631-635 match the 'KMSKS' region motif; that stretch reads KMSKS. An ATP-binding site is contributed by lysine 634.

This sequence belongs to the class-I aminoacyl-tRNA synthetase family.

It localises to the cytoplasm. The catalysed reaction is tRNA(Leu) + L-leucine + ATP = L-leucyl-tRNA(Leu) + AMP + diphosphate. This chain is Leucine--tRNA ligase, found in Dichelobacter nodosus (strain VCS1703A).